Consider the following 275-residue polypeptide: Large ribosomal subunit protein uL2 (275 aa).

2 disordered regions span residues Lys38–Lys59 and Gly222–Lys275. 2 stretches are compositionally biased toward basic residues: residues Lys39–Lys59 and Met254–Lys275.

The protein belongs to the universal ribosomal protein uL2 family. Part of the 50S ribosomal subunit. Forms a bridge to the 30S subunit in the 70S ribosome.

Its function is as follows. One of the primary rRNA binding proteins. Required for association of the 30S and 50S subunits to form the 70S ribosome, for tRNA binding and peptide bond formation. It has been suggested to have peptidyltransferase activity; this is somewhat controversial. Makes several contacts with the 16S rRNA in the 70S ribosome. This chain is Large ribosomal subunit protein uL2, found in Herpetosiphon aurantiacus (strain ATCC 23779 / DSM 785 / 114-95).